The sequence spans 431 residues: uncharacterized protein (431 aa).

Helical transmembrane passes span 42-62 (LLIGMFGSVSLVNLLTIIGCL) and 74-94 (VMIFTWNLVLSQFFSILATML). An N-linked (GlcNAc...) asparagine; by host glycan is attached at Asn-105. 5 consecutive transmembrane segments (helical) span residues 111–131 (LVLFVDDVGLYSTALFFLFLI), 153–173 (AGVALYAVAFAWVLSIVAAVP), 202–222 (MWFLLGAPMIAVLANVVELAY), 236–256 (VCTFYVTCLMLFVPYYCFRVL), and 279–299 (ATRTLLTMRLGILPLFIIAFF).

Its subcellular location is the membrane. This is an uncharacterized protein from Homo sapiens (Human).